Reading from the N-terminus, the 345-residue chain is MPSFTSKTLLAALAGAAAVNAHGHVKNVVVNGASFQGYDINSFPYTQNPPKVAAWTASNTDNGFVGPESFASSDIICHKNSANAQGRIVVAAGDSVFVQWDTWPESHHGPVIDYLASCGNTGCDKIEKTALEFFKIAEAGLVNGAQAPGRWASDVLIDNNNSWMIKIPANIRPGQYVLRHEIIALHSGGDLNGAQNYPQCFNIEVTGSGTVLPQGVKGTSLYTPTDAGIRFNIYRSLDSYPIPGPALPAGFAPVAQGSSAIVSSATAITGAATNAPAPIATTTAVNVVPSPTTIVTSVVQTSAAQTSAVQTAVPVQTSTRPISTRPQPTRCPGLGRRHLRKVARA.

The N-terminal stretch at 1 to 21 (MPSFTSKTLLAALAGAAAVNA) is a signal peptide. Cu(2+)-binding residues include His22 and His107. A disulfide bridge links Cys77 with Cys200. N-linked (GlcNAc...) asparagine glycosylation occurs at Asn160. The O2 site is built by His186 and Gln195. Tyr197 serves as a coordination point for Cu(2+). The tract at residues 315–345 (VQTSTRPISTRPQPTRCPGLGRRHLRKVARA) is disordered. The segment covering 318 to 327 (STRPISTRPQ) has biased composition (polar residues). Basic residues predominate over residues 335 to 345 (GRRHLRKVARA).

Belongs to the polysaccharide monooxygenase AA9 family. Requires Cu(2+) as cofactor.

Its subcellular location is the secreted. The enzyme catalyses [(1-&gt;4)-beta-D-glucosyl]n+m + reduced acceptor + O2 = 4-dehydro-beta-D-glucosyl-[(1-&gt;4)-beta-D-glucosyl]n-1 + [(1-&gt;4)-beta-D-glucosyl]m + acceptor + H2O.. Its function is as follows. Lytic polysaccharide monooxygenase (LPMO) that depolymerizes crystalline and amorphous polysaccharides via the oxidation of scissile alpha- or beta-(1-4)-glycosidic bonds, yielding C1 or C4 oxidation products. Catalysis by LPMOs requires the reduction of the active-site copper from Cu(II) to Cu(I) by a reducing agent and H(2)O(2) or O(2) as a cosubstrate. The sequence is that of AA9 family lytic polysaccharide monooxygenase D from Podospora anserina (strain S / ATCC MYA-4624 / DSM 980 / FGSC 10383) (Pleurage anserina).